Consider the following 562-residue polypeptide: MANASQCLDDVPMGGRWPAAPPDQYNEAHRLAMEELVSGGPEAMRGFLKRERLPSFLSEPEMGEILGCASVLPCGDEENSMSASVDCSSVTYFPDRSDVEPPILELGWPAFTTGSYRGVTRVDVHFQPSFGDTIYTCKEAARELIRSAREVIALVMDNFTDNDIFRDIHEACRKRRVPVYILLDQTQVSHFLTMCYNLGVSIETEPHMRVRLLTGNNYYTRSGTKIIGKVREKFLLVDGVKVATGNYSFTWTDGKLNSSNMLVLSGQVVEKFDLQFRILYAQSNPIGAKLLSSIRSRVMCLDKLPCKLPASKKPTLSSLLRMDQAKLSSTPKRHFDEFGAKFNRDVVALDKAAEDEWLQSCDIISGLKEMQTVEVQTEPWEGKNNVRGVDVGIQTSVAAANAATQTSVLSRMASTQTVMVSRSITTQTTETSQCTTQTPAPTSSVARLSNSSNSSSSSFSSASTTSTGSNCSMKSSDFSGTAFYQPEYPLGNCFKKLTKDRQYHYSTIRSKLNHMVSILSNRNRVPNSYMANDAPCYGLQRREIMHGSLLNLRDGVRFYPNM.

The interval 424-472 is disordered; sequence ITTQTTETSQCTTQTPAPTSSVARLSNSSNSSSSSFSSASTTSTGSNCS. Positions 425-472 are enriched in low complexity; sequence TTQTTETSQCTTQTPAPTSSVARLSNSSNSSSSSFSSASTTSTGSNCS.

Belongs to the FAM83 family.

The protein resides in the cytoplasm. It localises to the cytoskeleton. It is found in the spindle. Its subcellular location is the spindle pole. In terms of biological role, may regulate cell proliferation, growth, migration and epithelial to mesenchymal transition. May also be important for proper chromosome congression and alignment during mitosis. The protein is Protein FAM83D-B of Xenopus laevis (African clawed frog).